Reading from the N-terminus, the 263-residue chain is MPYAVLGATGNCGTALIQNLLQSSTSKVHAYCRDRRKLLYLLPHLADNKQVDIFDGSIHDLPLITECVRNCHAVFLVISTNDNVPQCRMALDTATAVIQALRILHGEGASMPKLVLLSSATLDDQLSQNTAPWVRWILLKSASQVYQDLSQAEAFLRQQQDWISTIFIKPGGLSVDVQRGHRLSLTEEKSPLSYLDLAAAMIEAADDPDGRYDLRNVGVAYTDGPARFPRGAPMCIFMGLVRHFLPFLHPYLPATGPNQGFLC.

The protein belongs to the avfA family. As to expression, specifically expressed in conidia.

It functions in the pathway secondary metabolite biosynthesis. Oxidoreductase; part of the gene cluster that mediates the biosynthesis of trypacidin, a mycotoxin with antiprotozoal activity and that plays a role in the infection process. The pathway begins with the synthesis of atrochrysone thioester by the polyketide synthase (PKS) tpcC. The atrochrysone carboxyl ACP thioesterase tpcB then breaks the thioester bond and releases the atrochrysone carboxylic acid from tpcC. The decarboxylase tpcK converts atrochrysone carboxylic acid to atrochrysone which is further reduced into emodin anthrone. The next step is performed by the emodin anthrone oxygenase tpcL that catalyzes the oxidation of emodinanthrone to emodin. Emodin O-methyltransferase encoded by tpcA catalyzes methylation of the 8-hydroxy group of emodin to form questin. Ring cleavage of questin by questin oxidase tpcI leads to desmethylsulochrin via several intermediates including questin epoxide. Another methylation step catalyzed by tpcM leads to the formation of sulochrin which is further converted to monomethylsulfochrin by tpcH. Finally, the tpcJ catalyzes the conversion of monomethylsulfochrin to trypacidin. Trypacidin is toxic for human pulmonary and bronchial epithelial cells by initiating the intracellular formation of nitric oxide (NO) and hydrogen peroxide (H(2)O(2)), thus triggering host necrotic cell death. The trypacidin pathway is also able to produce endocrocin via a distinct route from the endocrocin Enc pathway. This Aspergillus fumigatus (strain ATCC MYA-4609 / CBS 101355 / FGSC A1100 / Af293) (Neosartorya fumigata) protein is Oxidoreductase tpcG.